A 362-amino-acid polypeptide reads, in one-letter code: GTP cyclohydrolase FolE2 (362 aa).

This sequence belongs to the GTP cyclohydrolase IV family.

The enzyme catalyses GTP + H2O = 7,8-dihydroneopterin 3'-triphosphate + formate + H(+). It participates in cofactor biosynthesis; 7,8-dihydroneopterin triphosphate biosynthesis; 7,8-dihydroneopterin triphosphate from GTP: step 1/1. Converts GTP to 7,8-dihydroneopterin triphosphate. This is GTP cyclohydrolase FolE2 from Jannaschia sp. (strain CCS1).